Here is a 292-residue protein sequence, read N- to C-terminus: MKNHFKCIGIVGHPRHPTALTTHEMLWRWLCSKGYEVLVEQQIAHELQLSNVKTGTLAEIGQQADLAVVVGGDGNMLGAARTLARYDINVIGINRGNLGFLTDLDPDNALQQLADVLEGHYIAEKRFLLEAQVCQQDCQKRISTAINEVVLHPGKVAHMIEFEVYIDEVFAFSQRSDGLIISTPTGSTAYSLSAGGPILTPSLDAITLVPMFPHTLSARPLVINGDSTIRLRFSHRCSDLEISCDSQIALPIQDGEDVLIRRCDYHLNLIHPKDYSYFNTLSTKLGWSKKLF.

The Proton acceptor role is filled by D73. NAD(+) is bound by residues 73-74 (DG), 147-148 (NE), H158, R175, D177, 188-193 (TAYSLS), and Q247.

The protein belongs to the NAD kinase family. The cofactor is a divalent metal cation.

It localises to the cytoplasm. It catalyses the reaction NAD(+) + ATP = ADP + NADP(+) + H(+). In terms of biological role, involved in the regulation of the intracellular balance of NAD and NADP, and is a key enzyme in the biosynthesis of NADP. Catalyzes specifically the phosphorylation on 2'-hydroxyl of the adenosine moiety of NAD to yield NADP. The chain is NAD kinase from Klebsiella pneumoniae subsp. pneumoniae (strain ATCC 700721 / MGH 78578).